Here is a 463-residue protein sequence, read N- to C-terminus: Quinolone resistance protein NorB (463 aa).

The next 14 helical transmembrane spans lie at 17–37 (IGIVLSVITFWLFAQSLVNVV), 53–73 (IAVSITALFSGMFVVGAGGLA), 86–106 (IILNILGSLLIIISNIPLLLI), 107–127 (IGRLIQGLSAACIMPATLSII), 142–162 (YWSIGSWGGSGVCSFFGGAVA), 165–185 (LGWRWIFILSIIISLIALFLI), 201–221 (FDIKGLVLLVIMLLSLNILIT), 230–250 (SLLFITLLAITIGSFSLFIVL), 273–293 (TASNFLLNGVAGTLIVANTFV), 299–319 (YSSLQAGSLSITYLVMVLIMI), 334–354 (PMLIGTGVLIVGECLISLTFL), 357–377 (ILYVICCIIGYLFFGLGLGIY), 403–423 (MASALGGAFGVALSGAVYAIV), and 435–455 (IALWLNAGMGILSFVIILLLV).

This sequence belongs to the major facilitator superfamily. TCR/Tet family.

The protein resides in the cell membrane. In terms of biological role, multidrug efflux pump that acts independently of NorA and is one of the factors that confers resistance against diverse quinolones and chemical compounds. This chain is Quinolone resistance protein NorB (norB), found in Staphylococcus aureus (strain MSSA476).